The sequence spans 441 residues: NADH-quinone oxidoreductase subunit D 1 (441 aa).

This sequence belongs to the complex I 49 kDa subunit family. In terms of assembly, NDH-1 is composed of 14 different subunits. Subunits NuoB, C, D, E, F, and G constitute the peripheral sector of the complex.

It is found in the cell membrane. The catalysed reaction is a quinone + NADH + 5 H(+)(in) = a quinol + NAD(+) + 4 H(+)(out). Its function is as follows. NDH-1 shuttles electrons from NADH, via FMN and iron-sulfur (Fe-S) centers, to quinones in the respiratory chain. The immediate electron acceptor for the enzyme in this species is believed to be a menaquinone. Couples the redox reaction to proton translocation (for every two electrons transferred, four hydrogen ions are translocated across the cytoplasmic membrane), and thus conserves the redox energy in a proton gradient. The protein is NADH-quinone oxidoreductase subunit D 1 of Salinispora tropica (strain ATCC BAA-916 / DSM 44818 / JCM 13857 / NBRC 105044 / CNB-440).